We begin with the raw amino-acid sequence, 375 residues long: Lipid-A-disaccharide synthase (375 aa).

The protein belongs to the LpxB family.

It carries out the reaction a lipid X + a UDP-2-N,3-O-bis[(3R)-3-hydroxyacyl]-alpha-D-glucosamine = a lipid A disaccharide + UDP + H(+). It participates in bacterial outer membrane biogenesis; LPS lipid A biosynthesis. In terms of biological role, condensation of UDP-2,3-diacylglucosamine and 2,3-diacylglucosamine-1-phosphate to form lipid A disaccharide, a precursor of lipid A, a phosphorylated glycolipid that anchors the lipopolysaccharide to the outer membrane of the cell. The protein is Lipid-A-disaccharide synthase of Pseudomonas entomophila (strain L48).